Reading from the N-terminus, the 398-residue chain is 8-amino-7-oxononanoate synthase (398 aa).

Arg23 is a binding site for substrate. Position 110–111 (110–111) interacts with pyridoxal 5'-phosphate; it reads GY. A substrate-binding site is contributed by His135. Positions 181, 209, and 237 each coordinate pyridoxal 5'-phosphate. Lys240 carries the post-translational modification N6-(pyridoxal phosphate)lysine. Position 354 (Thr354) interacts with substrate.

It belongs to the class-II pyridoxal-phosphate-dependent aminotransferase family. BioF subfamily. As to quaternary structure, homodimer. Pyridoxal 5'-phosphate is required as a cofactor.

The catalysed reaction is 6-carboxyhexanoyl-[ACP] + L-alanine + H(+) = (8S)-8-amino-7-oxononanoate + holo-[ACP] + CO2. Its pathway is cofactor biosynthesis; biotin biosynthesis. In terms of biological role, catalyzes the decarboxylative condensation of pimeloyl-[acyl-carrier protein] and L-alanine to produce 8-amino-7-oxononanoate (AON), [acyl-carrier protein], and carbon dioxide. The sequence is that of 8-amino-7-oxononanoate synthase from Anaeromyxobacter sp. (strain K).